The sequence spans 624 residues: Chaperone protein DnaK (624 aa).

Residue threonine 174 is modified to Phosphothreonine; by autocatalysis. 2 disordered regions span residues 470-504 and 577-624; these read ITIK…KEEV and NGGA…DPDK. Positions 481 to 504 are enriched in basic and acidic residues; that stretch reads EEIKKMQKDAEEHAEEDKKRKEEV. Positions 577 to 605 are enriched in low complexity; that stretch reads NGGAQGAAGQAGPQGPQNGGQPNNDNGSD. A compositionally biased stretch (basic and acidic residues) spans 615–624; sequence GDFHKVDPDK.

Belongs to the heat shock protein 70 family.

In terms of biological role, acts as a chaperone. The protein is Chaperone protein DnaK of Lactobacillus johnsonii (strain CNCM I-12250 / La1 / NCC 533).